A 93-amino-acid chain; its full sequence is Small ribosomal subunit protein uS19 (93 aa).

Belongs to the universal ribosomal protein uS19 family.

Protein S19 forms a complex with S13 that binds strongly to the 16S ribosomal RNA. In Mycolicibacterium paratuberculosis (strain ATCC BAA-968 / K-10) (Mycobacterium paratuberculosis), this protein is Small ribosomal subunit protein uS19.